The sequence spans 675 residues: Putative elongation factor TypA-like SVR3, chloroplastic (675 aa).

A chloroplast-targeting transit peptide spans 1-58 (MELSLSTSSASPAVLRRQASPLLHKQQVLGVSFASALKPGGGALRFPSRRPLPRPITC). Residues 43–76 (ALRFPSRRPLPRPITCSASPSTAEPASEVKKKQL) form a disordered region. Residues 59-68 (SASPSTAEPA) are compositionally biased toward low complexity. Positions 80 to 275 (DNVRNIAIVA…AIIRCVPGPN (196 aa)) constitute a tr-type G domain.

Belongs to the TRAFAC class translation factor GTPase superfamily. Classic translation factor GTPase family. BipA subfamily.

It localises to the plastid. The protein resides in the chloroplast. Its function is as follows. Putative chloroplastic elongation factor involved in response to chilling stress. Required for proper chloroplast rRNA processing and/or translation at low temperature. Involved in plastid protein homeostasis. The polypeptide is Putative elongation factor TypA-like SVR3, chloroplastic (SVR3) (Arabidopsis thaliana (Mouse-ear cress)).